A 116-amino-acid chain; its full sequence is uncharacterized protein (116 aa).

The RRM domain occupies 6–83 (ATVHVGNLAP…RCIRVSPANF (78 aa)).

It localises to the cytoplasm. The protein resides in the nucleus. This is an uncharacterized protein from Schizosaccharomyces pombe (strain 972 / ATCC 24843) (Fission yeast).